Reading from the N-terminus, the 233-residue chain is Octanoyltransferase (233 aa).

The region spanning 36-211 (DTTPDEIWLV…EFTRQLGYPT (176 aa)) is the BPL/LPL catalytic domain. Substrate is bound by residues 75–82 (RGGQVTYH), 142–144 (SLG), and 155–157 (GLA). C173 acts as the Acyl-thioester intermediate in catalysis.

The protein belongs to the LipB family.

It is found in the cytoplasm. The catalysed reaction is octanoyl-[ACP] + L-lysyl-[protein] = N(6)-octanoyl-L-lysyl-[protein] + holo-[ACP] + H(+). It participates in protein modification; protein lipoylation via endogenous pathway; protein N(6)-(lipoyl)lysine from octanoyl-[acyl-carrier-protein]: step 1/2. In terms of biological role, catalyzes the transfer of endogenously produced octanoic acid from octanoyl-acyl-carrier-protein onto the lipoyl domains of lipoate-dependent enzymes. Lipoyl-ACP can also act as a substrate although octanoyl-ACP is likely to be the physiological substrate. The polypeptide is Octanoyltransferase (Yersinia pseudotuberculosis serotype O:3 (strain YPIII)).